Here is a 1005-residue protein sequence, read N- to C-terminus: MRGSGPRGAGRRRTQGRGGGGDTPRVPASLAGCYSAPLKGPLWTCLLLCAALRTLLASPSNEVNLLDSRTVLGDLGWIAFPKNGWEEIGEVDENYAPIHTYQVCKVMEQNQNNWLLTSWISNEGASRIFIELKFTLRDCNSLPGGLGTCKETFNMYYFESDDENGRNIKDNQYIKIDTIAADESFTELDLGDRVMKLNTEVRDVGPLSKKGFYLAFQDVGACIALVSVRVYYKKCPSVVRHLAVFPDTITGADSSQLLEVSGSCVNHSVTDDPPKMHCSAEGEWLVPIGKCMCKAGYEEKNGTCQVCRPGFFKASPHSQTCSKCPPHSYTHEEASTSCVCEKDYFRRESDPPTMACTRPPSAPRNAISNVNETSVFLEWIPPADTGGGKDVSYYILCKKCNSHAGVCEECGGHVRYLPQQIGLKNTSVMMADPLAHTNYTFEIEAVNGVSDLSPGTRQYVSVNVTTNQAAPSPVTNVKKGKIAKNSISLSWQEPDRPNGIILEYEIKYFEKDQETSYTIIKSKETTITAEGLKPASVYVFQIRARTAAGYGVFSRRFEFETTPVFGASNDQSQIPIIGVSVTVGVILLAVMIGFLLSGSCCECGCGRASSLCAVAHPSLIWRCGYSKAKQDPEEEKMHFHNGHIKLPGVRTYIDPHTYEDPTQAVHEFGKEIEASCITIERVIGAGEFGEVCSGRLKLPGKRELPVATKTLKVGYTEKQRRDFLSEASIMGQFDHPNIIHLEGVVTKSKPVMIVTEYMENGSLDTFLKKNDGQFTVIQLVGMLRGIAAGMKYLSDMGYVHRDLAARNILINSNLVCKVSDFGLSRVLEDDPEAAYTTRGGKIPIRWTAPEAIAFRKFTSASDVWSYGIVMWEVVSYGERPYWEMTNQDVIKAVEEGYRLPSPMDCPAALYQLMLDCWQKDRNSRPKFDDIVNMLDKLIRNPSSLKTLVNASSRVSTLLAEHGSLGSGAYRSVGEWLEATKMGRYTEIFMENGYSSMDAVAQVTLE.

The segment at 1-24 (MRGSGPRGAGRRRTQGRGGGGDTP) is disordered. The N-terminal stretch at 1-26 (MRGSGPRGAGRRRTQGRGGGGDTPRV) is a signal peptide. Topologically, residues 27–575 (PASLAGCYSA…GASNDQSQIP (549 aa)) are extracellular. In terms of domain architecture, Eph LBD spans 62–240 (EVNLLDSRTV…YYKKCPSVVR (179 aa)). Residues Asn266, Asn301, Asn371, Asn425, Asn438, and Asn463 are each glycosylated (N-linked (GlcNAc...) asparagine). Fibronectin type-III domains are found at residues 359-469 (PPSA…TNQA) and 470-564 (APSP…TTPV). A helical transmembrane segment spans residues 576-596 (IIGVSVTVGVILLAVMIGFLL). Over 597 to 1005 (SGSCCECGCG…MDAVAQVTLE (409 aa)) the chain is Cytoplasmic. Phosphotyrosine; by autocatalysis is present on residues Tyr652 and Tyr658. In terms of domain architecture, Protein kinase spans 677 to 938 (ITIERVIGAG…DIVNMLDKLI (262 aa)). ATP contacts are provided by residues 683 to 691 (IGAGEFGEV) and Lys709. Asp802 serves as the catalytic Proton acceptor. A phosphotyrosine; by autocatalysis mark is found at Tyr835 and Tyr984. The SAM domain occupies 967–1005 (GAYRSVGEWLEATKMGRYTEIFMENGYSSMDAVAQVTLE).

Belongs to the protein kinase superfamily. Tyr protein kinase family. Ephrin receptor subfamily. As to quaternary structure, heterotetramer upon binding of the ligand. The heterotetramer is composed of an ephrin dimer and a receptor dimer. Oligomerization is probably required to induce biological responses. Interacts (via SAM domain) with SAMD5 (via SAM domain). Phosphorylated. Phosphorylation is stimulated by the ligand EFNA5. Dephosphorylation upon stimulation by glucose, inhibits EPHA5 forward signaling and results in insulin secretion. Almost exclusively expressed in the nervous system. Predominantly expressed in neurons.

It localises to the cell membrane. The protein resides in the cell projection. Its subcellular location is the axon. The protein localises to the dendrite. It catalyses the reaction L-tyrosyl-[protein] + ATP = O-phospho-L-tyrosyl-[protein] + ADP + H(+). Receptor tyrosine kinase which binds promiscuously GPI-anchored ephrin-A family ligands residing on adjacent cells, leading to contact-dependent bidirectional signaling into neighboring cells. The signaling pathway downstream of the receptor is referred to as forward signaling while the signaling pathway downstream of the ephrin ligand is referred to as reverse signaling. Among GPI-anchored ephrin-A ligands, EFNA5 most probably constitutes the cognate/functional ligand for EPHA5. Functions as an axon guidance molecule during development and may be involved in the development of the retinotectal, entorhino-hippocampal and hippocamposeptal pathways. Together with EFNA5 plays also a role in synaptic plasticity in adult brain through regulation of synaptogenesis. In addition to its function in the nervous system, the interaction of EPHA5 with EFNA5 mediates communication between pancreatic islet cells to regulate glucose-stimulated insulin secretion. This is Ephrin type-A receptor 5 (Epha5) from Rattus norvegicus (Rat).